We begin with the raw amino-acid sequence, 843 residues long: Protein P (843 aa).

Residues 1-177 are terminal protein domain (TP); that stretch reads MPLSYPHFRK…FCGSPYSWEQ (177 aa). A spacer region spans residues 178 to 346; the sequence is ELQHGSTSLN…YCLSHIINLL (169 aa). 2 disordered regions span residues 228–259 and 283–314; these read KQGQ…GVEP and EKAN…SVGS. A compositionally biased stretch (basic residues) spans 239–249; sequence RSGRLRSRVHT. The polymerase/reverse transcriptase domain (RT) stretch occupies residues 347-690; the sequence is EDWGPCYEHG…YMNLYPVARQ (344 aa). The Reverse transcriptase domain maps to 357 to 600; it reads QHYIRTPRTP…YSLHFMGYVI (244 aa). Residues Asp-429, Asp-551, and Asp-552 each contribute to the Mg(2+) site.

Belongs to the hepadnaviridae P protein family.

It catalyses the reaction DNA(n) + a 2'-deoxyribonucleoside 5'-triphosphate = DNA(n+1) + diphosphate. The enzyme catalyses Endonucleolytic cleavage to 5'-phosphomonoester.. Activated by host HSP70 and HSP40 in vitro to be able to bind the epsilon loop of the pgRNA. Because deletion of the RNase H region renders the protein partly chaperone-independent, the chaperones may be needed indirectly to relieve occlusion of the RNA-binding site by this domain. Inhibited by several reverse-transcriptase inhibitors: Lamivudine, Adefovir and Entecavir. In terms of biological role, multifunctional enzyme that converts the viral RNA genome into dsDNA in viral cytoplasmic capsids. This enzyme displays a DNA polymerase activity that can copy either DNA or RNA templates, and a ribonuclease H (RNase H) activity that cleaves the RNA strand of RNA-DNA heteroduplexes in a partially processive 3'- to 5'-endonucleasic mode. Neo-synthesized pregenomic RNA (pgRNA) are encapsidated together with the P protein, and reverse-transcribed inside the nucleocapsid. Initiation of reverse-transcription occurs first by binding the epsilon loop on the pgRNA genome, and is initiated by protein priming, thereby the 5'-end of (-)DNA is covalently linked to P protein. Partial (+)DNA is synthesized from the (-)DNA template and generates the relaxed circular DNA (RC-DNA) genome. After budding and infection, the RC-DNA migrates in the nucleus, and is converted into a plasmid-like covalently closed circular DNA (cccDNA). The activity of P protein does not seem to be necessary for cccDNA generation, and is presumably released from (+)DNA by host nuclear DNA repair machinery. This is Protein P from Homo sapiens (Human).